We begin with the raw amino-acid sequence, 201 residues long: E3 ubiquitin-protein ligase LAP (201 aa).

The Cytoplasmic portion of the chain corresponds to methionine 1–asparagine 92. The RING-CH-type zinc-finger motif lies at aspartate 9–lysine 69. Residues cysteine 17, cysteine 20, cysteine 31, cysteine 33, histidine 41, cysteine 44, cysteine 59, and cysteine 62 each contribute to the Zn(2+) site. The helical transmembrane segment at leucine 93–isoleucine 113 threads the bilayer. Over lysine 114 to glutamate 123 the chain is Lumenal. A helical membrane pass occupies residues leucine 124–alanine 144. Residues leucine 145–asparagine 201 are Cytoplasmic-facing. A disordered region spans residues glutamine 168 to tyrosine 188. Over residues glutamate 169–tyrosine 188 the composition is skewed to acidic residues.

It belongs to the poxviridae LAP protein family.

It is found in the host membrane. The protein localises to the host Golgi apparatus. Its subcellular location is the host trans-Golgi network membrane. It localises to the host early endosome membrane. The enzyme catalyses S-ubiquitinyl-[E2 ubiquitin-conjugating enzyme]-L-cysteine + [acceptor protein]-L-lysine = [E2 ubiquitin-conjugating enzyme]-L-cysteine + N(6)-ubiquitinyl-[acceptor protein]-L-lysine.. E3 ubiquitin-protein ligase which promotes ubiquitination and subsequent degradation of host MHC-I and CD4 molecules, presumably to prevent lysis of infected cells by cytotoxic T-lymphocytes and NK cell. Binds target molecules through transmembrane interaction. The result of this ubiquitination is the enhancement of the endocytosis of the target chain and the delivery to the lysosome, where it is proteolytically destroyed. The polypeptide is E3 ubiquitin-protein ligase LAP (Oryctolagus cuniculus (Rabbit)).